A 304-amino-acid polypeptide reads, in one-letter code: Coenzyme PQQ synthesis protein B (304 aa).

This sequence belongs to the PqqB family.

It functions in the pathway cofactor biosynthesis; pyrroloquinoline quinone biosynthesis. Its function is as follows. May be involved in the transport of PQQ or its precursor to the periplasm. The protein is Coenzyme PQQ synthesis protein B of Pseudomonas aeruginosa (strain ATCC 15692 / DSM 22644 / CIP 104116 / JCM 14847 / LMG 12228 / 1C / PRS 101 / PAO1).